Reading from the N-terminus, the 273-residue chain is Formamidopyrimidine-DNA glycosylase (273 aa).

Residue Pro-2 is the Schiff-base intermediate with DNA of the active site. The Proton donor role is filled by Glu-3. The active-site Proton donor; for beta-elimination activity is Lys-59. The DNA site is built by His-92 and Arg-111. Residues 239 to 273 form an FPG-type zinc finger; sequence KVYGKTDEPCVVCGTPIEKIKLNGRGTHFCPNCQK. The Proton donor; for delta-elimination activity role is filled by Arg-263.

It belongs to the FPG family. In terms of assembly, monomer. It depends on Zn(2+) as a cofactor.

It carries out the reaction Hydrolysis of DNA containing ring-opened 7-methylguanine residues, releasing 2,6-diamino-4-hydroxy-5-(N-methyl)formamidopyrimidine.. It catalyses the reaction 2'-deoxyribonucleotide-(2'-deoxyribose 5'-phosphate)-2'-deoxyribonucleotide-DNA = a 3'-end 2'-deoxyribonucleotide-(2,3-dehydro-2,3-deoxyribose 5'-phosphate)-DNA + a 5'-end 5'-phospho-2'-deoxyribonucleoside-DNA + H(+). In terms of biological role, involved in base excision repair of DNA damaged by oxidation or by mutagenic agents. Acts as a DNA glycosylase that recognizes and removes damaged bases. Has a preference for oxidized purines, such as 7,8-dihydro-8-oxoguanine (8-oxoG). Has AP (apurinic/apyrimidinic) lyase activity and introduces nicks in the DNA strand. Cleaves the DNA backbone by beta-delta elimination to generate a single-strand break at the site of the removed base with both 3'- and 5'-phosphates. This Listeria monocytogenes serovar 1/2a (strain ATCC BAA-679 / EGD-e) protein is Formamidopyrimidine-DNA glycosylase.